A 635-amino-acid polypeptide reads, in one-letter code: Chaperone protein HtpG (635 aa).

The tract at residues 1-346 (MSQTTTNSAS…SADLPLNVSR (346 aa)) is a; substrate-binding. Residues 347 to 563 (EILQESRDVR…QNELSPHLLR (217 aa)) are b. The tract at residues 564–635 (MLKAAGQEAP…KRLNGLLLKA (72 aa)) is c.

This sequence belongs to the heat shock protein 90 family. Homodimer.

The protein localises to the cytoplasm. Its function is as follows. Molecular chaperone. Has ATPase activity. This is Chaperone protein HtpG from Bordetella parapertussis (strain 12822 / ATCC BAA-587 / NCTC 13253).